A 338-amino-acid chain; its full sequence is Ketol-acid reductoisomerase (NADP(+)) (338 aa).

Residues 1-181 (MKVYYDKDCN…GGGRSGIIET (181 aa)) form the KARI N-terminal Rossmann domain. NADP(+)-binding positions include 24 to 27 (YGSQ), Arg-47, Ser-50, Ser-52, and 82 to 85 (DETQ). His-107 is an active-site residue. Gly-133 contacts NADP(+). The KARI C-terminal knotted domain occupies 182-327 (NFREETETDL…ARLRAMMPWI (146 aa)). Residues Asp-190, Glu-194, Glu-226, and Glu-230 each contribute to the Mg(2+) site. Ser-251 contacts substrate.

The protein belongs to the ketol-acid reductoisomerase family. It depends on Mg(2+) as a cofactor.

The catalysed reaction is (2R)-2,3-dihydroxy-3-methylbutanoate + NADP(+) = (2S)-2-acetolactate + NADPH + H(+). It catalyses the reaction (2R,3R)-2,3-dihydroxy-3-methylpentanoate + NADP(+) = (S)-2-ethyl-2-hydroxy-3-oxobutanoate + NADPH + H(+). Its pathway is amino-acid biosynthesis; L-isoleucine biosynthesis; L-isoleucine from 2-oxobutanoate: step 2/4. It functions in the pathway amino-acid biosynthesis; L-valine biosynthesis; L-valine from pyruvate: step 2/4. Its function is as follows. Involved in the biosynthesis of branched-chain amino acids (BCAA). Catalyzes an alkyl-migration followed by a ketol-acid reduction of (S)-2-acetolactate (S2AL) to yield (R)-2,3-dihydroxy-isovalerate. In the isomerase reaction, S2AL is rearranged via a Mg-dependent methyl migration to produce 3-hydroxy-3-methyl-2-ketobutyrate (HMKB). In the reductase reaction, this 2-ketoacid undergoes a metal-dependent reduction by NADPH to yield (R)-2,3-dihydroxy-isovalerate. In Pelobacter propionicus (strain DSM 2379 / NBRC 103807 / OttBd1), this protein is Ketol-acid reductoisomerase (NADP(+)).